The primary structure comprises 476 residues: Riboflavin transporter rft-2 (476 aa).

Residues 1 to 21 (MGCSAATFILVALFGSSSWMG) form a helical membrane-spanning segment. The Cytoplasmic portion of the chain corresponds to 22–41 (TNSVWMQLPLLTSELPEQWN). A helical membrane pass occupies residues 42–62 (LPSYLAGVVQIACIVPLIYTI). Over 63 to 75 (LHKGVKSFTIPTA) the chain is Extracellular. Residues 76-96 (PLIIALLSLACCCQLGLSFFW) traverse the membrane as a helical segment. The Cytoplasmic segment spans residues 97–113 (SDYSEIFGAPRSWPLYS). The chain crosses the membrane as a helical span at residues 114–134 (LLFGLAIVNAMSNVLFMPFMA). The Extracellular portion of the chain corresponds to 135-140 (QFHPAY). The helical transmembrane segment at 141 to 161 (LNAYFVGMGLSSLAPSLLSLA) threads the bilayer. At 162 to 185 (QGTSMFKCDEKGVAERFPPNFSVS) the chain is on the cytoplasmic side. The chain crosses the membrane as a helical span at residues 186–206 (IFFFVIFSFTCVALFAFIALY). Over 207-306 (RSGAHTHFAT…HPVDYITGVK (100 aa)) the chain is Extracellular. The segment at 215–249 (ATPNKKEPNEGTPLKKDLNNTSSSRKGDDEDESPI) is disordered. Residues 218–232 (NKKEPNEGTPLKKDL) show a composition bias toward basic and acidic residues. N-linked (GlcNAc...) asparagine glycosylation is present at asparagine 233. A helical membrane pass occupies residues 307–327 (FTFLLFTTALVNAQMNGIITS). At 328–342 (VQSYAALPYSQATYH) the chain is on the cytoplasmic side. Residues 343–363 (FAVTLSNVVSPLSSFLPFFIS) traverse the membrane as a helical segment. Residues 364–366 (VRS) are Extracellular-facing. Residues 367-387 (IPVLAILTACSTAMTAFIVYL) form a helical membrane-spanning segment. Residues 388–393 (AALSPN) are Cytoplasmic-facing. A helical transmembrane segment spans residues 394-414 (LIFNSVTIGSALSIGGSLIAA). The Extracellular portion of the chain corresponds to 415–437 (GLHSYLRVVFASLLREGHQSESR). Residues 438 to 458 (LFWCGVFIQIGSFIGSAVMFP) traverse the membrane as a helical segment. Residues 459–476 (LVNIAHLFTSAPQCKSIS) are Cytoplasmic-facing.

This sequence belongs to the riboflavin transporter family. In terms of tissue distribution, expressed in intestine and pharynx.

The protein localises to the cell membrane. The enzyme catalyses riboflavin(in) = riboflavin(out). Its function is as follows. Riboflavin transporter. In Caenorhabditis elegans, this protein is Riboflavin transporter rft-2.